The sequence spans 188 residues: MYNILKKSFYKQKSLDVASSLLGKMLLFNQHKGIITETEAYIGQDDQAAHSFHGYTKRTAVMFGNPGFSYVYLIYGMYHCLNVVTEPEGFPAAILIRSIILLSKNTPHTKVNGPGKICKTLHITKEHNNIDMTANHSFCICNTNLNIDDYICTPRIGISKATDKFWRFVIPDVTSLQYIDTKLVPTLT.

Belongs to the DNA glycosylase MPG family.

The polypeptide is Putative 3-methyladenine DNA glycosylase (Ehrlichia ruminantium (Cowdria ruminantium)).